The chain runs to 674 residues: Probable potassium transport system protein Kup (674 aa).

12 consecutive transmembrane segments (helical) span residues 7-27, 52-72, 95-115, 145-165, 169-189, 204-224, 244-264, 291-311, 342-362, 368-388, 397-417, and 425-445; these read IFWG…TSPL, LSLV…LIAL, WLIL…TLTP, LVTF…TSFI, FGPL…VNLI, LMLL…SVFL, IYLT…GQGA, VYLF…QALI, IYIR…LVYF, MEAA…ILLS, VVFN…FLIS, and GGYV…IWYF.

This sequence belongs to the HAK/KUP transporter (TC 2.A.72) family.

It localises to the cell membrane. The catalysed reaction is K(+)(in) + H(+)(in) = K(+)(out) + H(+)(out). Transport of potassium into the cell. Likely operates as a K(+):H(+) symporter. The sequence is that of Probable potassium transport system protein Kup from Ligilactobacillus salivarius (strain UCC118) (Lactobacillus salivarius).